The chain runs to 174 residues: Serine protease 2 (174 aa).

C15 and C36 are oxidised to a cystine. Active-site charge relay system residues include H35, D65, and S147. An intrachain disulfide couples C141 to C168.

The protein belongs to the peptidase S1 family.

The protein localises to the secreted. In terms of biological role, broad substrate specificity. The chain is Serine protease 2 from Streptomyces fradiae (Streptomyces roseoflavus).